The sequence spans 186 residues: Small ribosomal subunit protein eS7 (186 aa).

Belongs to the eukaryotic ribosomal protein eS7 family. As to quaternary structure, component of the small ribosomal subunit. Mature ribosomes consist of a small (40S) and a large (60S) subunit. The 40S subunit contains about 32 different proteins and 1 molecule of RNA (18S). The 60S subunit contains 45 different proteins and 3 molecules of RNA (25S, 5.8S and 5S).

The protein localises to the cytoplasm. Component of the ribosome, a large ribonucleoprotein complex responsible for the synthesis of proteins in the cell. The small ribosomal subunit (SSU) binds messenger RNAs (mRNAs) and translates the encoded message by selecting cognate aminoacyl-transfer RNA (tRNA) molecules. The large subunit (LSU) contains the ribosomal catalytic site termed the peptidyl transferase center (PTC), which catalyzes the formation of peptide bonds, thereby polymerizing the amino acids delivered by tRNAs into a polypeptide chain. The nascent polypeptides leave the ribosome through a tunnel in the LSU and interact with protein factors that function in enzymatic processing, targeting, and the membrane insertion of nascent chains at the exit of the ribosomal tunnel. RPS7A is involved in nucleolar processing of pre-18S ribosomal RNA and ribosome assembly. This Candida albicans (strain SC5314 / ATCC MYA-2876) (Yeast) protein is Small ribosomal subunit protein eS7 (RPS7A).